The chain runs to 206 residues: MSAVRSKICGITRIEDALAAAEAGADAIGLVFYPKSPRAVTVLQARAIIAALPPFITTVGLFVNASRCELNETLDAVALDMLQFHGDETPEECDGYHRPYVKALRVKAGDDIAGVCRTYRNARGVLLDTYVEGVPGGTGETFDWALIPDDLDKPVILAGGLTSANVAQAIAQVRPYAVDVSGGVEKSKGIKDREKILAFMSAVHGT.

The protein belongs to the TrpF family.

It carries out the reaction N-(5-phospho-beta-D-ribosyl)anthranilate = 1-(2-carboxyphenylamino)-1-deoxy-D-ribulose 5-phosphate. It functions in the pathway amino-acid biosynthesis; L-tryptophan biosynthesis; L-tryptophan from chorismate: step 3/5. This is N-(5'-phosphoribosyl)anthranilate isomerase from Pseudomonas syringae pv. syringae (strain B728a).